We begin with the raw amino-acid sequence, 155 residues long: Calmodulin, flagellar (155 aa).

EF-hand domains lie at 14-49 (EQIAEFKEAFSLFDKDGDGTITTSELGTVMRSLGQN), 50-85 (PTEAELHDMINEVDADGNGTIDFTEFLTMMAKKMKD), 87-122 (DNEEEIKEAFKVFDKDGNGFISAQELRHVMCNLGEK), and 123-155 (LTDEEVDEMIREADIDGDNQINYTEFVKMMMQK). Residues Asp27, Asp29, Asp31, Thr33, Glu38, Asp63, Asp65, Asn67, Thr69, Glu74, Asp100, Asp102, Asn104, Glu111, Asp136, Asp138, Asp140, Gln142, and Glu147 each contribute to the Ca(2+) site.

It belongs to the calmodulin family.

The protein resides in the cell projection. Its subcellular location is the cilium. It is found in the flagellum. In terms of biological role, calmodulin mediates the control of a large number of enzymes, ion channels and other proteins by Ca(2+). Among the enzymes to be stimulated by the calmodulin-Ca(2+) complex are a number of protein kinases and phosphatases. This is Calmodulin, flagellar (CAM1) from Naegleria gruberi (Amoeba).